Here is a 624-residue protein sequence, read N- to C-terminus: Polycomb group protein EMF2A (624 aa).

The C2H2-type zinc finger occupies 338 to 359 (CPFCLVRCGNFKGLECHMTSSH). The interval 420-445 (DAHIMESGSPEETQAESEDDVQEENE) is disordered. Residues 432-445 (TQAESEDDVQEENE) are compositionally biased toward acidic residues. The tract at residues 474 to 609 (LSANRADPRN…SARTMDTCNR (136 aa)) is VEFS-box.

It belongs to the VEFS (VRN2-EMF2-FIS2-SU(Z)12) family. As to quaternary structure, component of the polycomb repressive complex 2 (PRC2), which methylates 'Lys-27' residues of histone H3 (H3K27me3), leading to transcriptional repression of the affected target gene. Widely expressed. Highly expressed in shoot apical meristem and inflorescence meristem. Expressed in roots, leaves and immature seeds.

In terms of biological role, polycomb group (PcG) protein. PcG proteins act by forming multiprotein complexes, which are required to maintain the transcriptionally repressive state of homeotic genes throughout development. PcG proteins are not required to initiate repression, but to maintain it during later stages of development. They act via the methylation of histones, rendering chromatin heritably changed in its expressibility. The protein is Polycomb group protein EMF2A of Oryza sativa subsp. japonica (Rice).